Reading from the N-terminus, the 941-residue chain is Bifunctional glutamine synthetase adenylyltransferase/adenylyl-removing enzyme (941 aa).

Residues 1–437 (MPMPTVSMSP…AAEFAELLAP (437 aa)) form an adenylyl removase region. Residues 444–941 (PDALADYWRA…FPLGKDETAL (498 aa)) form an adenylyl transferase region.

It belongs to the GlnE family. It depends on Mg(2+) as a cofactor.

It carries out the reaction [glutamine synthetase]-O(4)-(5'-adenylyl)-L-tyrosine + phosphate = [glutamine synthetase]-L-tyrosine + ADP. The catalysed reaction is [glutamine synthetase]-L-tyrosine + ATP = [glutamine synthetase]-O(4)-(5'-adenylyl)-L-tyrosine + diphosphate. Its function is as follows. Involved in the regulation of glutamine synthetase GlnA, a key enzyme in the process to assimilate ammonia. When cellular nitrogen levels are high, the C-terminal adenylyl transferase (AT) inactivates GlnA by covalent transfer of an adenylyl group from ATP to specific tyrosine residue of GlnA, thus reducing its activity. Conversely, when nitrogen levels are low, the N-terminal adenylyl removase (AR) activates GlnA by removing the adenylyl group by phosphorolysis, increasing its activity. The regulatory region of GlnE binds the signal transduction protein PII (GlnB) which indicates the nitrogen status of the cell. This is Bifunctional glutamine synthetase adenylyltransferase/adenylyl-removing enzyme from Xanthomonas axonopodis pv. citri (strain 306).